A 429-amino-acid polypeptide reads, in one-letter code: Histidine--tRNA ligase (429 aa).

The protein belongs to the class-II aminoacyl-tRNA synthetase family. Homodimer.

It localises to the cytoplasm. The enzyme catalyses tRNA(His) + L-histidine + ATP = L-histidyl-tRNA(His) + AMP + diphosphate + H(+). The polypeptide is Histidine--tRNA ligase (Streptococcus pneumoniae (strain JJA)).